The sequence spans 119 residues: Basic phospholipase A2 taipoxin alpha chain (119 aa).

7 disulfides stabilise this stretch: C11–C72, C27–C118, C29–C45, C44–C99, C51–C92, C61–C85, and C79–C90. The Ca(2+) site is built by Y28, G30, and G32. Residue H48 is part of the active site. D49 contributes to the Ca(2+) binding site. D93 is an active-site residue.

The protein belongs to the phospholipase A2 family. Group I subfamily. D49 sub-subfamily. As to quaternary structure, heterotrimer of alpha, beta, and gamma chains; non-covalently linked. Requires Ca(2+) as cofactor. In terms of tissue distribution, expressed by the venom gland.

It localises to the secreted. The catalysed reaction is a 1,2-diacyl-sn-glycero-3-phosphocholine + H2O = a 1-acyl-sn-glycero-3-phosphocholine + a fatty acid + H(+). In terms of biological role, heterotrimer: Snake venom phospholipase A2 (PLA2) heterotrimer that acts as a potent presynaptic neurotoxin by blocking synaptic transmission and synaptic vesicle recycling. May act by binding in a calcium-dependent fashion to neurotonal pentraxin-1 (NPTX1) and neurotonal pentraxin-2 (NPTX2), but not to neuronal pentraxin receptor (NPTXR). Also binds to taipoxin-associated calcium binding protein 49 (RCN2), a protein localized in the lumen of endoplasmic reticulum. Monomer (alpha chain): Snake venom phospholipase A2 (PLA2) alpha chain that possesses the same high enzymatic activity as the heterotrimer. PLA2 catalyzes the calcium-dependent hydrolysis of the 2-acyl groups in 3-sn-phosphoglycerides. This chain is Basic phospholipase A2 taipoxin alpha chain, found in Oxyuranus scutellatus scutellatus (Australian taipan).